The following is a 486-amino-acid chain: Bifunctional protein GlmU (486 aa).

The segment at Met1–Arg236 is pyrophosphorylase. UDP-N-acetyl-alpha-D-glucosamine is bound by residues Leu11–Gly14, Lys25, Gln78, and Gly83–Thr84. A Mg(2+)-binding site is contributed by Asp109. UDP-N-acetyl-alpha-D-glucosamine contacts are provided by Gly146, Glu161, Asn176, and Asn234. Asn234 lines the Mg(2+) pocket. Positions Ala237–Ala257 are linker. The tract at residues Gly258–Glu486 is N-acetyltransferase. UDP-N-acetyl-alpha-D-glucosamine is bound by residues Arg339 and Lys357. The active-site Proton acceptor is His369. Residues Tyr372 and Asn383 each contribute to the UDP-N-acetyl-alpha-D-glucosamine site. Acetyl-CoA is bound by residues Ala386, Asn392–Tyr393, and Ala429. The tract at residues Arg459–Glu486 is disordered. The segment covering Ala465–Glu486 has biased composition (low complexity).

This sequence in the N-terminal section; belongs to the N-acetylglucosamine-1-phosphate uridyltransferase family. It in the C-terminal section; belongs to the transferase hexapeptide repeat family. As to quaternary structure, homotrimer. Requires Mg(2+) as cofactor.

The protein resides in the cytoplasm. It carries out the reaction alpha-D-glucosamine 1-phosphate + acetyl-CoA = N-acetyl-alpha-D-glucosamine 1-phosphate + CoA + H(+). It catalyses the reaction N-acetyl-alpha-D-glucosamine 1-phosphate + UTP + H(+) = UDP-N-acetyl-alpha-D-glucosamine + diphosphate. The protein operates within nucleotide-sugar biosynthesis; UDP-N-acetyl-alpha-D-glucosamine biosynthesis; N-acetyl-alpha-D-glucosamine 1-phosphate from alpha-D-glucosamine 6-phosphate (route II): step 2/2. It functions in the pathway nucleotide-sugar biosynthesis; UDP-N-acetyl-alpha-D-glucosamine biosynthesis; UDP-N-acetyl-alpha-D-glucosamine from N-acetyl-alpha-D-glucosamine 1-phosphate: step 1/1. Its pathway is bacterial outer membrane biogenesis; LPS lipid A biosynthesis. Catalyzes the last two sequential reactions in the de novo biosynthetic pathway for UDP-N-acetylglucosamine (UDP-GlcNAc). The C-terminal domain catalyzes the transfer of acetyl group from acetyl coenzyme A to glucosamine-1-phosphate (GlcN-1-P) to produce N-acetylglucosamine-1-phosphate (GlcNAc-1-P), which is converted into UDP-GlcNAc by the transfer of uridine 5-monophosphate (from uridine 5-triphosphate), a reaction catalyzed by the N-terminal domain. This is Bifunctional protein GlmU from Leifsonia xyli subsp. xyli (strain CTCB07).